The following is an 85-amino-acid chain: Large ribosomal subunit protein bL27 (85 aa).

It belongs to the bacterial ribosomal protein bL27 family.

The protein is Large ribosomal subunit protein bL27 of Stutzerimonas stutzeri (strain A1501) (Pseudomonas stutzeri).